A 415-amino-acid chain; its full sequence is Gamma-glutamyl phosphate reductase (415 aa).

Belongs to the gamma-glutamyl phosphate reductase family.

The protein localises to the cytoplasm. It catalyses the reaction L-glutamate 5-semialdehyde + phosphate + NADP(+) = L-glutamyl 5-phosphate + NADPH + H(+). It participates in amino-acid biosynthesis; L-proline biosynthesis; L-glutamate 5-semialdehyde from L-glutamate: step 2/2. In terms of biological role, catalyzes the NADPH-dependent reduction of L-glutamate 5-phosphate into L-glutamate 5-semialdehyde and phosphate. The product spontaneously undergoes cyclization to form 1-pyrroline-5-carboxylate. The chain is Gamma-glutamyl phosphate reductase from Lachnospira eligens (strain ATCC 27750 / DSM 3376 / VPI C15-48 / C15-B4) (Eubacterium eligens).